We begin with the raw amino-acid sequence, 396 residues long: Cell division protein FtsZ 1 (396 aa).

The interval 1 to 38 (MDSIVQDAIDEAEESEDSASEPADVAGGGGDTVPTGTM) is disordered. The segment covering 8-19 (AIDEAEESEDSA) has biased composition (acidic residues). Residues 61–65 (GAGSN), 148–150 (GTG), glutamate 179, arginine 183, and aspartate 226 each bind GTP. The interval 358–396 (QIYGRNEAAEGDGPAQESTPEPEPEPQAGSEIEDIDYVE) is disordered.

The protein belongs to the FtsZ family. As to quaternary structure, homodimer. Polymerizes to form a dynamic ring structure in a strictly GTP-dependent manner. Interacts directly with several other division proteins.

Its subcellular location is the cytoplasm. Its function is as follows. Essential cell division protein that forms a contractile ring structure (Z ring) at the future cell division site. The regulation of the ring assembly controls the timing and the location of cell division. One of the functions of the FtsZ ring is to recruit other cell division proteins to the septum to produce a new cell wall between the dividing cells. Binds GTP and shows GTPase activity. In Halobacterium salinarum (strain ATCC 29341 / DSM 671 / R1), this protein is Cell division protein FtsZ 1.